Reading from the N-terminus, the 113-residue chain is Endoribonuclease SymE (113 aa).

A SpoVT-AbrB domain is found at Ser-29 to Pro-74.

It belongs to the SymE family.

The protein resides in the cytoplasm. Its function is as follows. Involved in the degradation and recycling of damaged RNA. It is itself a target for degradation by the ATP-dependent protease Lon. This chain is Endoribonuclease SymE, found in Escherichia coli O6:K15:H31 (strain 536 / UPEC).